The sequence spans 833 residues: Prickle-like protein 1 (833 aa).

Positions 1–22 (MPLEMDQKISKHTFGCQRSSTS) are disordered. Residues 14–122 (FGCQRSSTSD…NIKMLSRAVM (109 aa)) form the PET domain. LIM zinc-binding domains lie at 124–188 (AMCE…ELLK), 189–249 (PRCS…HYAE), and 250–313 (YCES…EDVH). Disordered stretches follow at residues 312-346 (VHASDSSDSAFQSARSRESRRSVRMGKSSRSADQC), 432-456 (EDNRSNEHWMSDNIKGKNDLQRNSR), 603-702 (CQEK…ERNP), 767-786 (CSSSSSDSEEEGYFLGQPIP), and 805-833 (NALSSSQFSQRTTKSKKKKGHKGKNCIIS). 2 stretches are compositionally biased toward basic and acidic residues: residues 432–453 (EDNRSNEHWMSDNIKGKNDLQR) and 603–614 (CQEKPPPEEKPM). Over residues 669 to 680 (RPHHHRRRKSRK) the composition is skewed to basic residues. The span at 817-833 (TKSKKKKGHKGKNCIIS) shows a compositional bias: basic residues. Cys830 bears the Cysteine methyl ester mark. The S-farnesyl cysteine moiety is linked to residue Cys830. Residues 831–833 (IIS) constitute a propeptide, removed in mature form.

This sequence belongs to the prickle / espinas / testin family. In terms of assembly, interacts with dvl2/dsh and mapk8/jnk1.

It is found in the cell membrane. Acts in a planar cell polarity (PCP) complex; polarization along the apical/basal axis of epithelial cells. Regulates the polarized assembly of fibronectrin on the surface of the mesoderm during gastrulation. Essential for gastrulation cell movements, cooperating with dvl2/dsh to activate jnk. Acts together with tes to control axial elongation. The polypeptide is Prickle-like protein 1 (Xenopus tropicalis (Western clawed frog)).